The sequence spans 205 residues: Thiamine-phosphate synthase (205 aa).

4-amino-2-methyl-5-(diphosphooxymethyl)pyrimidine is bound by residues 35 to 39 and Asn-67; that span reads QYRDK. Mg(2+) is bound by residues Asp-68 and Asp-86. Thr-105 contributes to the 4-amino-2-methyl-5-(diphosphooxymethyl)pyrimidine binding site. 132-134 contacts 2-[(2R,5Z)-2-carboxy-4-methylthiazol-5(2H)-ylidene]ethyl phosphate; that stretch reads SLT. Lys-135 lines the 4-amino-2-methyl-5-(diphosphooxymethyl)pyrimidine pocket. Gly-162 lines the 2-[(2R,5Z)-2-carboxy-4-methylthiazol-5(2H)-ylidene]ethyl phosphate pocket.

This sequence belongs to the thiamine-phosphate synthase family. It depends on Mg(2+) as a cofactor.

The catalysed reaction is 2-[(2R,5Z)-2-carboxy-4-methylthiazol-5(2H)-ylidene]ethyl phosphate + 4-amino-2-methyl-5-(diphosphooxymethyl)pyrimidine + 2 H(+) = thiamine phosphate + CO2 + diphosphate. It carries out the reaction 2-(2-carboxy-4-methylthiazol-5-yl)ethyl phosphate + 4-amino-2-methyl-5-(diphosphooxymethyl)pyrimidine + 2 H(+) = thiamine phosphate + CO2 + diphosphate. The enzyme catalyses 4-methyl-5-(2-phosphooxyethyl)-thiazole + 4-amino-2-methyl-5-(diphosphooxymethyl)pyrimidine + H(+) = thiamine phosphate + diphosphate. It participates in cofactor biosynthesis; thiamine diphosphate biosynthesis; thiamine phosphate from 4-amino-2-methyl-5-diphosphomethylpyrimidine and 4-methyl-5-(2-phosphoethyl)-thiazole: step 1/1. Its function is as follows. Condenses 4-methyl-5-(beta-hydroxyethyl)thiazole monophosphate (THZ-P) and 2-methyl-4-amino-5-hydroxymethyl pyrimidine pyrophosphate (HMP-PP) to form thiamine monophosphate (TMP). The polypeptide is Thiamine-phosphate synthase (Pseudomonas syringae pv. syringae (strain B728a)).